The chain runs to 121 residues: Small ribosomal subunit protein uS13 (121 aa).

The segment at 91–121 (HRMSLPVRGQRTRTNARTRRGSRKTVAGRKK) is disordered. Residues 100–121 (QRTRTNARTRRGSRKTVAGRKK) are compositionally biased toward basic residues.

Belongs to the universal ribosomal protein uS13 family. As to quaternary structure, part of the 30S ribosomal subunit. Forms a loose heterodimer with protein S19. Forms two bridges to the 50S subunit in the 70S ribosome.

In terms of biological role, located at the top of the head of the 30S subunit, it contacts several helices of the 16S rRNA. In the 70S ribosome it contacts the 23S rRNA (bridge B1a) and protein L5 of the 50S subunit (bridge B1b), connecting the 2 subunits; these bridges are implicated in subunit movement. Contacts the tRNAs in the A and P-sites. The chain is Small ribosomal subunit protein uS13 from Prochlorococcus marinus (strain SARG / CCMP1375 / SS120).